The chain runs to 452 residues: Zinc finger protein 277 (452 aa).

The segment at 200–224 (LMCLYCEKIFRDRPTLKEHMRKKGH) adopts a C2H2-type 1 zinc-finger fold. The segment at 248–271 (APTPRKQHLQKRRRETASVSTVAD) is disordered. Residues 252–261 (RKQHLQKRRR) show a composition bias toward basic residues. Residues 361-385 (LRCVTCDLQFDEEELLVEHMAQESH) form a C2H2-type 2 zinc finger.

It belongs to the ZNF277 family. Interacts with components of the origin recognition complex (ORC) complex, Orc2 and Orc3, components of the SAGA transcription coactivator-HAT complex, Gcn5 and e(y)2, components of the mRNP biogenesis THO complex, thoc5 and e(y)2, and a component of the TFIID complex, TBP. Also interacts with polybromo, a component of the chromatin remodeling SWI/SNF complex.

It is found in the nucleus. Its subcellular location is the cytoplasm. In terms of biological role, DNA binding protein which is involved in the positive regulation of both basal and inducible transcription. Mainly localizes to active promoter sites and interacts with components of various transcription and replication regulatory complexes, such as the ORC, SAGA, THO, TFIID and SWI/SNF complexes. It may therefore regulate transcription by promoting the association of these complexes to their binding sites. The polypeptide is Zinc finger protein 277 (Drosophila melanogaster (Fruit fly)).